Here is a 97-residue protein sequence, read N- to C-terminus: Small ribosomal subunit protein bS20 (97 aa).

The span at 76–85 shows a compositional bias: basic residues; it reads RNNGARKKAG. The tract at residues 76-97 is disordered; that stretch reads RNNGARKKAGLAKALQKVSQAS. Positions 86-97 are enriched in low complexity; sequence LAKALQKVSQAS.

It belongs to the bacterial ribosomal protein bS20 family.

Functionally, binds directly to 16S ribosomal RNA. This is Small ribosomal subunit protein bS20 from Microcystis aeruginosa (strain NIES-843 / IAM M-2473).